A 237-amino-acid polypeptide reads, in one-letter code: N-alpha-acetyltransferase 40 (237 aa).

Residue G2 is the site of N-myristoyl glycine attachment. The N-acetyltransferase domain occupies 63-216 (SGLEPATVDW…EDCSYEILSR (154 aa)). Substrate contacts are provided by residues Y85, 127-129 (DVE), and Y138. Residues 140–142 (VQL) and 148–153 (RKGLGK) each bind acetyl-CoA. T174 is a binding site for substrate. N179 is a binding site for acetyl-CoA. Substrate contacts are provided by S197 and Y211.

Belongs to the acetyltransferase family. NAA40 subfamily.

The protein resides in the cytoplasm. It is found in the nucleus. The enzyme catalyses N-terminal L-seryl-[histone H4] + acetyl-CoA = N-terminal N(alpha)-acetyl-L-seryl-[histone H4] + CoA + H(+). The catalysed reaction is N-terminal L-seryl-[histone H2A] + acetyl-CoA = N-terminal N(alpha)-acetyl-L-seryl-[histone H2A] + CoA + H(+). N-alpha-acetyltransferase that specifically mediates the acetylation of the N-terminal residues of histones H4 and H2A. In contrast to other N-alpha-acetyltransferase, has a very specific selectivity for histones H4 and H2A N-terminus and specifically recognizes the 'Ser-Gly-Arg-Gly sequence'. Acts as a negative regulator of apoptosis. May play a role in hepatic lipid metabolism. This is N-alpha-acetyltransferase 40 from Mus musculus (Mouse).